A 35-amino-acid chain; its full sequence is Cupiennin-1b (35 aa).

At Glu-35 the chain carries Glutamic acid 1-amide.

It belongs to the cationic peptide 04 (cupiennin) family. 01 subfamily. As to expression, expressed by the venom gland.

It is found in the secreted. In terms of biological role, has antimicrobial activity against E.coli, E.faecalis, P.aeruginosa, and S.aureus. Has insecticidal and hemolytic activities. Probably acts by disturbing membrane function with its amphipathic structure. The protein is Cupiennin-1b of Cupiennius salei (American wandering spider).